The following is a 149-amino-acid chain: SsrA-binding protein (149 aa).

It belongs to the SmpB family.

The protein resides in the cytoplasm. Its function is as follows. Required for rescue of stalled ribosomes mediated by trans-translation. Binds to transfer-messenger RNA (tmRNA), required for stable association of tmRNA with ribosomes. tmRNA and SmpB together mimic tRNA shape, replacing the anticodon stem-loop with SmpB. tmRNA is encoded by the ssrA gene; the 2 termini fold to resemble tRNA(Ala) and it encodes a 'tag peptide', a short internal open reading frame. During trans-translation Ala-aminoacylated tmRNA acts like a tRNA, entering the A-site of stalled ribosomes, displacing the stalled mRNA. The ribosome then switches to translate the ORF on the tmRNA; the nascent peptide is terminated with the 'tag peptide' encoded by the tmRNA and targeted for degradation. The ribosome is freed to recommence translation, which seems to be the essential function of trans-translation. In Wolbachia pipientis subsp. Culex pipiens (strain wPip), this protein is SsrA-binding protein.